The sequence spans 164 residues: Protein-export protein SecB (164 aa).

The protein belongs to the SecB family. As to quaternary structure, homotetramer, a dimer of dimers. One homotetramer interacts with 1 SecA dimer.

The protein localises to the cytoplasm. Functionally, one of the proteins required for the normal export of preproteins out of the cell cytoplasm. It is a molecular chaperone that binds to a subset of precursor proteins, maintaining them in a translocation-competent state. It also specifically binds to its receptor SecA. This chain is Protein-export protein SecB, found in Rhodopseudomonas palustris (strain BisB18).